Consider the following 312-residue polypeptide: Acetaldehyde dehydrogenase 4 (312 aa).

Residue 12–15 (SGNI) participates in NAD(+) binding. Cys132 (acyl-thioester intermediate) is an active-site residue. NAD(+) is bound by residues 163-171 (SAGPGTRAN) and Asn290.

The protein belongs to the acetaldehyde dehydrogenase family.

The catalysed reaction is acetaldehyde + NAD(+) + CoA = acetyl-CoA + NADH + H(+). The chain is Acetaldehyde dehydrogenase 4 from Azotobacter vinelandii (strain DJ / ATCC BAA-1303).